Reading from the N-terminus, the 520-residue chain is Cyclin-L2 (520 aa).

Position 2 is an N-acetylalanine (Ala2). Cyclin-like stretches follow at residues 83–185 (ELIQ…RVLK) and 198–282 (KIIV…KILQ). Residues 316–520 (LPGGTQVLDG…DHPGHSRHRR (205 aa)) form a disordered region. Ser330, Ser338, Ser348, and Ser351 each carry phosphoserine. Basic and acidic residues predominate over residues 357-367 (RRLEGAKKAKA). At Ser369 the chain carries Phosphoserine. Residues 376–390 (KGRESRSRSRSREQS) show a composition bias toward basic and acidic residues. Residues 385-423 (RSREQSYSRSPSRSASPKRRKSDSGSTSGGSKSQSRSRS) are RS. Residues 408–436 (SGSTSGGSKSQSRSRSRSDSPPRQAPRSA) show a composition bias toward low complexity. Basic and acidic residues predominate over residues 441 to 454 (SEIRGSRKSKDCKY). Residues 456–471 (QKPHKSRSRSSSRSRS) are compositionally biased toward basic residues. 2 stretches are compositionally biased toward basic and acidic residues: residues 472–481 (RSRERADNPG) and 489–514 (YYRD…DHPG).

It belongs to the cyclin family. Cyclin L subfamily. In terms of assembly, interacts with CDK11A, CDK11B, CDK12, CDK13 and POLR2A, the hyperphosphorylated C-terminal domain (CTD) of RNA polymerase II. May form a ternary complex with CDK11B and casein kinase II (CKII). Interacts with pre-mRNA-splicing factors, including at least SRSF1, SRSF2 AND SRSF7/SLU7. Widely expressed.

The protein resides in the nucleus speckle. Its subcellular location is the nucleus. It localises to the nucleoplasm. In terms of biological role, involved in pre-mRNA splicing. May induce cell death, possibly by acting on the transcription and RNA processing of apoptosis-related factors. The protein is Cyclin-L2 (CCNL2) of Homo sapiens (Human).